A 204-amino-acid chain; its full sequence is MIEFIFKANKSITNGEINLKDLPGSSGRMDLVCRCVSSAFFLSHDLRRDTIFYSVHYGAPNPPVAIKFVGSELKRVSPDERSIALFIKKALDKSPMQLWKESTSGIYIAKKEFKDIILEKKNEGKEIYYLHKDGEDIENIFNKENNAENKNIVFILGDHIGIGEEDEKFLEDIGALKVSLSPLELHANHCITIVHNALDKAKLK.

S-adenosyl-L-methionine contacts are provided by residues Leu130, Gly157, 180-185, and Cys190; that span reads LSPLEL.

The protein belongs to the methyltransferase superfamily. TrmY family. Homodimer.

It localises to the cytoplasm. The enzyme catalyses pseudouridine(54) in tRNA + S-adenosyl-L-methionine = N(1)-methylpseudouridine(54) in tRNA + S-adenosyl-L-homocysteine + H(+). Its function is as follows. Specifically catalyzes the N1-methylation of pseudouridine at position 54 (Psi54) in tRNAs. The sequence is that of tRNA (pseudouridine(54)-N(1))-methyltransferase from Methanococcus aeolicus (strain ATCC BAA-1280 / DSM 17508 / OCM 812 / Nankai-3).